Consider the following 396-residue polypeptide: Phosphoglycerate kinase (396 aa).

Residues D22–N24, R37, H60–R63, R118, and R151 contribute to the substrate site. ATP is bound by residues K201, E323, and G353–T356.

This sequence belongs to the phosphoglycerate kinase family. As to quaternary structure, monomer.

It localises to the cytoplasm. The enzyme catalyses (2R)-3-phosphoglycerate + ATP = (2R)-3-phospho-glyceroyl phosphate + ADP. Its pathway is carbohydrate degradation; glycolysis; pyruvate from D-glyceraldehyde 3-phosphate: step 2/5. In Xanthobacter autotrophicus (strain ATCC BAA-1158 / Py2), this protein is Phosphoglycerate kinase.